The sequence spans 208 residues: FMN-dependent NADH:quinone oxidoreductase (208 aa).

FMN is bound at residue 99 to 102 (MWNF).

This sequence belongs to the azoreductase type 1 family. In terms of assembly, homodimer. The cofactor is FMN.

It catalyses the reaction 2 a quinone + NADH + H(+) = 2 a 1,4-benzosemiquinone + NAD(+). The enzyme catalyses N,N-dimethyl-1,4-phenylenediamine + anthranilate + 2 NAD(+) = 2-(4-dimethylaminophenyl)diazenylbenzoate + 2 NADH + 2 H(+). Its function is as follows. Quinone reductase that provides resistance to thiol-specific stress caused by electrophilic quinones. In terms of biological role, also exhibits azoreductase activity. Catalyzes the reductive cleavage of the azo bond in aromatic azo compounds to the corresponding amines. This chain is FMN-dependent NADH:quinone oxidoreductase, found in Brevibacillus brevis (strain 47 / JCM 6285 / NBRC 100599).